We begin with the raw amino-acid sequence, 435 residues long: Casein kinase 1-like protein 12 (435 aa).

A Protein kinase domain is found at Tyr-9–Ile-278. ATP is bound by residues Ile-15–Ile-23 and Lys-38. The active-site Proton acceptor is the Asp-128. 2 disordered regions span residues Val-313 to Met-363 and Leu-394 to His-414.

The protein belongs to the protein kinase superfamily. CK1 Ser/Thr protein kinase family. Casein kinase I subfamily. As to quaternary structure, monomer. Autophosphorylated.

It localises to the cytoplasm. It catalyses the reaction L-seryl-[protein] + ATP = O-phospho-L-seryl-[protein] + ADP + H(+). It carries out the reaction L-threonyl-[protein] + ATP = O-phospho-L-threonyl-[protein] + ADP + H(+). Its function is as follows. Casein kinases are operationally defined by their preferential utilization of acidic proteins such as caseins as substrates. It can phosphorylate a large number of proteins. This Arabidopsis thaliana (Mouse-ear cress) protein is Casein kinase 1-like protein 12.